The sequence spans 471 residues: UDP-N-acetylmuramoylalanine--D-glutamate ligase (471 aa).

Residue 122–128 (GSNAKST) participates in ATP binding.

It belongs to the MurCDEF family.

Its subcellular location is the cytoplasm. It carries out the reaction UDP-N-acetyl-alpha-D-muramoyl-L-alanine + D-glutamate + ATP = UDP-N-acetyl-alpha-D-muramoyl-L-alanyl-D-glutamate + ADP + phosphate + H(+). Its pathway is cell wall biogenesis; peptidoglycan biosynthesis. Cell wall formation. Catalyzes the addition of glutamate to the nucleotide precursor UDP-N-acetylmuramoyl-L-alanine (UMA). The protein is UDP-N-acetylmuramoylalanine--D-glutamate ligase of Psychrobacter cryohalolentis (strain ATCC BAA-1226 / DSM 17306 / VKM B-2378 / K5).